The chain runs to 222 residues: Peptidyl-prolyl cis-trans isomerase FKBP7 (222 aa).

The first 23 residues, 1–23, serve as a signal peptide directing secretion; it reads MPKTMHFLFRFIVFFYLWGLFTA. N45 carries N-linked (GlcNAc...) asparagine glycosylation. One can recognise a PPIase FKBP-type domain in the interval 53-145; sequence GDLLNAHYDG…IFEIELYAVT (93 aa). EF-hand domains follow at residues 145-180 and 189-222; these read TKGP…EFEK and YQDA…HDEL. Ca(2+) is bound by residues D158, D160, D162, Q164, E169, D202, D204, D206, and E213. Residues 219–222 carry the Prevents secretion from ER motif; it reads HDEL.

Post-translationally, glycosylated.

It localises to the endoplasmic reticulum lumen. It catalyses the reaction [protein]-peptidylproline (omega=180) = [protein]-peptidylproline (omega=0). Functionally, PPIases accelerate the folding of proteins during protein synthesis. This is Peptidyl-prolyl cis-trans isomerase FKBP7 (FKBP7) from Pongo abelii (Sumatran orangutan).